A 237-amino-acid chain; its full sequence is Ribonuclease PH (237 aa).

Phosphate-binding positions include arginine 86 and 124 to 126 (GTR).

This sequence belongs to the RNase PH family. Homohexameric ring arranged as a trimer of dimers.

The catalysed reaction is tRNA(n+1) + phosphate = tRNA(n) + a ribonucleoside 5'-diphosphate. In terms of biological role, phosphorolytic 3'-5' exoribonuclease that plays an important role in tRNA 3'-end maturation. Removes nucleotide residues following the 3'-CCA terminus of tRNAs; can also add nucleotides to the ends of RNA molecules by using nucleoside diphosphates as substrates, but this may not be physiologically important. Probably plays a role in initiation of 16S rRNA degradation (leading to ribosome degradation) during starvation. This chain is Ribonuclease PH, found in Rhodopseudomonas palustris (strain HaA2).